Consider the following 197-residue polypeptide: NADH-quinone oxidoreductase subunit C (197 aa).

The protein belongs to the complex I 30 kDa subunit family. In terms of assembly, NDH-1 is composed of 14 different subunits. Subunits NuoB, C, D, E, F, and G constitute the peripheral sector of the complex.

It is found in the cell inner membrane. It carries out the reaction a quinone + NADH + 5 H(+)(in) = a quinol + NAD(+) + 4 H(+)(out). In terms of biological role, NDH-1 shuttles electrons from NADH, via FMN and iron-sulfur (Fe-S) centers, to quinones in the respiratory chain. The immediate electron acceptor for the enzyme in this species is believed to be ubiquinone. Couples the redox reaction to proton translocation (for every two electrons transferred, four hydrogen ions are translocated across the cytoplasmic membrane), and thus conserves the redox energy in a proton gradient. The protein is NADH-quinone oxidoreductase subunit C of Neisseria meningitidis serogroup B (strain ATCC BAA-335 / MC58).